The primary structure comprises 404 residues: S-adenosylmethionine synthase (404 aa).

Residues 1 to 13 (MSQSRYFFTSESV) are compositionally biased toward polar residues. The segment at 1–21 (MSQSRYFFTSESVSEGHPDKV) is disordered. H17 contributes to the ATP binding site. D19 provides a ligand contact to Mg(2+). A K(+)-binding site is contributed by E45. Positions 58 and 101 each coordinate L-methionine. The segment at 101-111 (QSPDINRGVDR) is flexible loop. ATP-binding positions include 172-174 (DAK), 245-246 (RF), D254, 260-261 (RK), A277, and K281. Residue D254 coordinates L-methionine. K285 contacts L-methionine.

The protein belongs to the AdoMet synthase family. In terms of assembly, homotetramer; dimer of dimers. Mg(2+) is required as a cofactor. The cofactor is K(+).

Its subcellular location is the cytoplasm. The enzyme catalyses L-methionine + ATP + H2O = S-adenosyl-L-methionine + phosphate + diphosphate. It functions in the pathway amino-acid biosynthesis; S-adenosyl-L-methionine biosynthesis; S-adenosyl-L-methionine from L-methionine: step 1/1. Catalyzes the formation of S-adenosylmethionine (AdoMet) from methionine and ATP. The overall synthetic reaction is composed of two sequential steps, AdoMet formation and the subsequent tripolyphosphate hydrolysis which occurs prior to release of AdoMet from the enzyme. The sequence is that of S-adenosylmethionine synthase from Chlorobium phaeobacteroides (strain DSM 266 / SMG 266 / 2430).